The chain runs to 208 residues: Large ribosomal subunit protein uL3 (208 aa).

A disordered region spans residues 117–147; that stretch reads FQGVIKRHGQSRGPMAHGSRYHRRPGSMGPV.

This sequence belongs to the universal ribosomal protein uL3 family. Part of the 50S ribosomal subunit. Forms a cluster with proteins L14 and L19.

One of the primary rRNA binding proteins, it binds directly near the 3'-end of the 23S rRNA, where it nucleates assembly of the 50S subunit. This is Large ribosomal subunit protein uL3 from Streptococcus equi subsp. zooepidemicus (strain H70).